Consider the following 137-residue polypeptide: Small ribosomal subunit protein uS12 (137 aa).

The disordered stretch occupies residues 1-44 (MPTINQLVRKGRKSRTSKSDAPALNFGYNSMKKKATDNPAPQKR). A 3-methylthioaspartic acid modification is found at Asp102.

This sequence belongs to the universal ribosomal protein uS12 family. As to quaternary structure, part of the 30S ribosomal subunit. Contacts proteins S8 and S17. May interact with IF1 in the 30S initiation complex.

Functionally, with S4 and S5 plays an important role in translational accuracy. In terms of biological role, interacts with and stabilizes bases of the 16S rRNA that are involved in tRNA selection in the A site and with the mRNA backbone. Located at the interface of the 30S and 50S subunits, it traverses the body of the 30S subunit contacting proteins on the other side and probably holding the rRNA structure together. The combined cluster of proteins S8, S12 and S17 appears to hold together the shoulder and platform of the 30S subunit. The polypeptide is Small ribosomal subunit protein uS12 (Latilactobacillus sakei subsp. sakei (strain 23K) (Lactobacillus sakei subsp. sakei)).